The following is a 485-amino-acid chain: Membrane-bound lytic murein transglycosylase F (485 aa).

The N-terminal stretch at 1-29 (MFAHTALRQRCAKWLLATGLFLLLGACVE) is a signal peptide. The non-LT domain stretch occupies residues 30–267 (KPSTLERVKE…RLKDRYYGHV (238 aa)). An LT domain region spans residues 268–485 (DVLGYVGAYT…DKPADKSSPM (218 aa)). The active site involves Glu-314. The tract at residues 465–485 (EGNLHVPGVNKDKPADKSSPM) is disordered. A compositionally biased stretch (basic and acidic residues) spans 474–485 (NKDKPADKSSPM).

It in the N-terminal section; belongs to the bacterial solute-binding protein 3 family. This sequence in the C-terminal section; belongs to the transglycosylase Slt family.

The protein localises to the cell outer membrane. It carries out the reaction Exolytic cleavage of the (1-&gt;4)-beta-glycosidic linkage between N-acetylmuramic acid (MurNAc) and N-acetylglucosamine (GlcNAc) residues in peptidoglycan, from either the reducing or the non-reducing ends of the peptidoglycan chains, with concomitant formation of a 1,6-anhydrobond in the MurNAc residue.. Functionally, murein-degrading enzyme that degrades murein glycan strands and insoluble, high-molecular weight murein sacculi, with the concomitant formation of a 1,6-anhydromuramoyl product. Lytic transglycosylases (LTs) play an integral role in the metabolism of the peptidoglycan (PG) sacculus. Their lytic action creates space within the PG sacculus to allow for its expansion as well as for the insertion of various structures such as secretion systems and flagella. The sequence is that of Membrane-bound lytic murein transglycosylase F from Pseudomonas putida (strain ATCC 47054 / DSM 6125 / CFBP 8728 / NCIMB 11950 / KT2440).